Consider the following 861-residue polypeptide: Translation initiation factor IF-2 (861 aa).

Disordered regions lie at residues 1–69 and 92–273; these read MSDA…GESA and ARAR…GREK. A compositionally biased stretch (gly residues) spans 53–65; that stretch reads GGPGGKQGGGAKG. Residues 94–108 are compositionally biased toward basic and acidic residues; that stretch reads ARAEAADREAQKKQD. The segment covering 109-120 has biased composition (low complexity); sequence AAAMAQRAASEQ. Composition is skewed to basic and acidic residues over residues 121–155 and 163–186; these read RQLE…KAEA and DSGR…KRTP. Residues 213–223 show a composition bias toward low complexity; sequence PGPAAKQQPAR. Residues 255–273 show a composition bias toward basic and acidic residues; that stretch reads RAREREKQRRQDTSGGREK. Positions 357-527 constitute a tr-type G domain; that stretch reads PRAPVIAVMG…ALQAELLDLK (171 aa). The segment at 366–373 is G1; sequence GHVDHGKT. GTP is bound at residue 366–373; it reads GHVDHGKT. The interval 391–395 is G2; it reads GITQH. The segment at 413 to 416 is G3; the sequence is DTPG. Residues 413–417 and 467–470 contribute to the GTP site; these read DTPGH and NKCD. Residues 467–470 form a G4 region; the sequence is NKCD. The interval 503–505 is G5; that stretch reads SAK.

It belongs to the TRAFAC class translation factor GTPase superfamily. Classic translation factor GTPase family. IF-2 subfamily.

The protein resides in the cytoplasm. Functionally, one of the essential components for the initiation of protein synthesis. Protects formylmethionyl-tRNA from spontaneous hydrolysis and promotes its binding to the 30S ribosomal subunits. Also involved in the hydrolysis of GTP during the formation of the 70S ribosomal complex. The sequence is that of Translation initiation factor IF-2 from Maricaulis maris (strain MCS10) (Caulobacter maris).